The chain runs to 382 residues: D-galactonate dehydratase (382 aa).

Position 183 (D183) interacts with Mg(2+). The Proton donor role is filled by H185. Residues E209 and E235 each contribute to the Mg(2+) site. H285 functions as the Proton acceptor in the catalytic mechanism.

This sequence belongs to the mandelate racemase/muconate lactonizing enzyme family. GalD subfamily. Mg(2+) serves as cofactor.

The catalysed reaction is D-galactonate = 2-dehydro-3-deoxy-D-galactonate + H2O. It functions in the pathway carbohydrate acid metabolism; D-galactonate degradation; D-glyceraldehyde 3-phosphate and pyruvate from D-galactonate: step 1/3. In terms of biological role, catalyzes the dehydration of D-galactonate to 2-keto-3-deoxy-D-galactonate. This is D-galactonate dehydratase from Salmonella paratyphi A (strain AKU_12601).